The primary structure comprises 584 residues: Probable pectinesterase/pectinesterase inhibitor (584 aa).

The signal sequence occupies residues M1–G22. The tract at residues N40–I191 is pectinesterase inhibitor. N91 and N105 each carry an N-linked (GlcNAc...) asparagine glycan. The segment at A246–G267 is disordered. The pectinesterase stretch occupies residues T272–N571. The substrate site is built by T349 and Q379. D402 functions as the Proton donor; for pectinesterase activity in the catalytic mechanism. D423 functions as the Nucleophile; for pectinesterase activity in the catalytic mechanism. Substrate contacts are provided by R492 and W494.

This sequence in the N-terminal section; belongs to the PMEI family. In the C-terminal section; belongs to the pectinesterase family. As to expression, pollen, and at much lower levels in pistils and petals.

The protein localises to the secreted. Its subcellular location is the cell wall. The catalysed reaction is [(1-&gt;4)-alpha-D-galacturonosyl methyl ester](n) + n H2O = [(1-&gt;4)-alpha-D-galacturonosyl](n) + n methanol + n H(+). It participates in glycan metabolism; pectin degradation; 2-dehydro-3-deoxy-D-gluconate from pectin: step 1/5. Its function is as follows. Acts in the modification of cell walls via demethylesterification of cell wall pectin. This chain is Probable pectinesterase/pectinesterase inhibitor (BP19), found in Brassica napus (Rape).